The following is a 212-amino-acid chain: MSMLTVAMPKGRIFDEAVGLLRKAGYNLPAEFEASRKLIVDVPEENMRFILAKPMDVPTYVEHGVADVGVAGKDVMLEEERDVYEVLDLKISECYLAVAGLPNYEKKHDLNPKVASKYPHLATRYFKEQGEQVEIIKLNGSIELAPLIGLADRIVDIVSTGRTLRENGLVELEKMMTITSRLIVNPVSYRMKDERIDEMVERLLQVVEGDGA.

Belongs to the ATP phosphoribosyltransferase family. Short subfamily. In terms of assembly, heteromultimer composed of HisG and HisZ subunits.

It localises to the cytoplasm. The catalysed reaction is 1-(5-phospho-beta-D-ribosyl)-ATP + diphosphate = 5-phospho-alpha-D-ribose 1-diphosphate + ATP. Its pathway is amino-acid biosynthesis; L-histidine biosynthesis; L-histidine from 5-phospho-alpha-D-ribose 1-diphosphate: step 1/9. Catalyzes the condensation of ATP and 5-phosphoribose 1-diphosphate to form N'-(5'-phosphoribosyl)-ATP (PR-ATP). Has a crucial role in the pathway because the rate of histidine biosynthesis seems to be controlled primarily by regulation of HisG enzymatic activity. This is ATP phosphoribosyltransferase (hisG) from Halalkalibacterium halodurans (strain ATCC BAA-125 / DSM 18197 / FERM 7344 / JCM 9153 / C-125) (Bacillus halodurans).